A 1246-amino-acid chain; its full sequence is HMG2-induced ER-remodeling protein 1 (1246 aa).

3 disordered regions span residues 19-241 (KGKR…GSLT), 263-288 (HHIQ…LPPI), and 816-836 (MPDA…KDEK). Residues 27–41 (KSAASTRTSEATTTS) show a composition bias toward low complexity. Positions 58-95 (TIASPQRPLSGQNVNNELSNSKPAVSAEKVSQQGQVPT) are enriched in polar residues. Ser102 bears the Phosphoserine mark. Thr128 bears the Phosphothreonine mark. Low complexity-rich tracts occupy residues 154 to 163 (RSSSISTSLN) and 211 to 230 (SKIS…PSSS). A compositionally biased stretch (basic and acidic residues) spans 271–282 (SGREQDSPHSES). Ser277 bears the Phosphoserine mark. A Phosphoserine modification is found at Ser1013. 2 stretches are compositionally biased toward polar residues: residues 1109-1133 (SSRH…TPDS) and 1200-1215 (SRSP…QQKA). Disordered regions lie at residues 1109–1157 (SSRH…LPKI) and 1192–1224 (SLYG…LVED). The residue at position 1130 (Thr1130) is a Phosphothreonine. Phosphoserine is present on residues Ser1200, Ser1204, and Ser1207.

It belongs to the GIP3/HER1 family. May interact with ribosomes.

It is found in the cytoplasm. Functionally, required for HMG2-induced endoplasmic reticulum-remodeling. The polypeptide is HMG2-induced ER-remodeling protein 1 (HER1) (Saccharomyces cerevisiae (strain ATCC 204508 / S288c) (Baker's yeast)).